A 503-amino-acid chain; its full sequence is Sarpagan bridge enzyme 1 (503 aa).

A helical; Signal-anchor for type II membrane protein membrane pass occupies residues 3–23 (ISVTTSIALATIVFFLYKLAT). Heme is bound at residue Cys-442.

The protein belongs to the cytochrome P450 family. It depends on heme as a cofactor. In terms of tissue distribution, highly expressed in roots. Expressed at low levels in leaves, stems and flowers.

Its subcellular location is the endoplasmic reticulum membrane. The catalysed reaction is (19E)-geissoschizine + reduced [NADPH--hemoprotein reductase] + O2 = polyneuridine aldehyde + oxidized [NADPH--hemoprotein reductase] + 2 H2O + H(+). It catalyses the reaction tetrahydroalstonine + A + reduced [NADPH--hemoprotein reductase] + O2 = alstonine + AH2 + oxidized [NADPH--hemoprotein reductase] + 2 H2O + H(+). It carries out the reaction ajmalicine + A + reduced [NADPH--hemoprotein reductase] + O2 = serpentine + AH2 + oxidized [NADPH--hemoprotein reductase] + 2 H2O + H(+). It participates in alkaloid biosynthesis; ajmaline biosynthesis. In terms of biological role, monooxygenase involved in the biosynthesis of ajmaline-type monoterpenoid indole alkaloids (MIAs) natural products, important plant-derived pharmaceuticals used in the therapy of heart disorders. Converts by cyclization the strictosidine-derived geissoschizine to the sarpagan alkaloid polyneuridine aldehyde, precursor of vomilenine, an intermediate chemical in the biosynthesis of ajmaline. Converts by aromatization the tetrahydro-beta-carboline alkaloids tetrahydroalstonine and ajmalicine to the corresponding beta-carboline alkaloids alstonine and serpentine, respectively. The sequence is that of Sarpagan bridge enzyme 1 from Rauvolfia serpentina (Serpentine wood).